We begin with the raw amino-acid sequence, 266 residues long: UPF0246 protein Pcryo_0542 (266 aa).

The protein belongs to the UPF0246 family.

This Psychrobacter cryohalolentis (strain ATCC BAA-1226 / DSM 17306 / VKM B-2378 / K5) protein is UPF0246 protein Pcryo_0542.